The primary structure comprises 314 residues: tRNA pseudouridine synthase B (314 aa).

Residue histidine 43 coordinates substrate. The active-site Nucleophile is the aspartate 48. Substrate-binding residues include tyrosine 76, tyrosine 179, and leucine 200.

The protein belongs to the pseudouridine synthase TruB family. Type 1 subfamily.

It catalyses the reaction uridine(55) in tRNA = pseudouridine(55) in tRNA. In terms of biological role, responsible for synthesis of pseudouridine from uracil-55 in the psi GC loop of transfer RNAs. This Escherichia coli O139:H28 (strain E24377A / ETEC) protein is tRNA pseudouridine synthase B.